Consider the following 414-residue polypeptide: MEMQQNCSISCFWETQPLGCVKISCIFYHSKPRNINGLFLPPSSNITLQKEIQEGIPLQSQSQEPLKPQENISRPIHHPLVLKTNFEEEEEVDEQNDASSLWTKTPEEIEEKRAIKEMCYKSGEYYRFHTPPDILSSKSMTPTAEKQLEKPLENGSELQEGDSLTVPTKLSQYERQGEIKTSLHGKPKTDIAAFENGGGDCYVPQRVIFLGVDESEALTEEKEITISKCSNTKDNKDSPHPKHSLTTRLVPTTHVLNATENISMKCREDPSSMNDVQPVKKPHFKGVKKRKWIYDEPQNFPNSGMQRAVQAPRPQNKMSYHRNNKNRNAENASYIHVQRDAVRTVALNAPSRSRPTHGSYNKVHANREPKPNLSPDKYTSTSYNDSAWRKRIPFSKTYSKSEKIYPEPRRNGSK.

Disordered regions lie at residues 136–168 (SSKS…TVPT), 297–333 (PQNF…ENAS), and 346–414 (ALNA…NGSK). The segment covering 350-359 (PSRSRPTHGS) has biased composition (polar residues). The segment covering 399–414 (SKSEKIYPEPRRNGSK) has biased composition (basic and acidic residues).

This is an uncharacterized protein from Homo sapiens (Human).